Consider the following 235-residue polypeptide: 7-cyano-7-deazaguanine synthase (235 aa).

11–21 serves as a coordination point for ATP; that stretch reads FSGGQDSTTCV. The Zn(2+) site is built by C199, C214, C217, and C220.

The protein belongs to the QueC family. Zn(2+) serves as cofactor.

The enzyme catalyses 7-carboxy-7-deazaguanine + NH4(+) + ATP = 7-cyano-7-deazaguanine + ADP + phosphate + H2O + H(+). The protein operates within purine metabolism; 7-cyano-7-deazaguanine biosynthesis. Functionally, catalyzes the ATP-dependent conversion of 7-carboxy-7-deazaguanine (CDG) to 7-cyano-7-deazaguanine (preQ(0)). In Janthinobacterium sp. (strain Marseille) (Minibacterium massiliensis), this protein is 7-cyano-7-deazaguanine synthase.